The sequence spans 577 residues: Moesin (577 aa).

An FERM domain is found at 2-295 (PKTISVRVTT…GNHELYMRRR (294 aa)). At Ser-74 the chain carries Phosphoserine. At Lys-79 the chain carries N6-acetyllysine. An N6-succinyllysine modification is found at Lys-83. Positions 115 to 120 (IYCPPE) match the [IL]-x-C-x-x-[DE] motif motif. A Phosphotyrosine modification is found at Tyr-116. Cys-117 is subject to S-nitrosocysteine. 2 positions are modified to N6-acetyllysine: Lys-139 and Lys-165. 3 disordered regions span residues 323–342 (LENE…KIER), 375–409 (LEQE…ASRD), and 466–518 (AMST…NERV). The span at 375 to 401 (LEQERKRAQSEAEKLAKERQEAEEAKE) shows a compositional bias: basic and acidic residues. Ser-407 is subject to Phosphoserine. Over residues 476-487 (AENEQDEQDENG) the composition is skewed to acidic residues. A compositionally biased stretch (basic and acidic residues) spans 492–518 (ADLRADAMAKDRSEEERTTEAEKNERV). Ser-527 bears the Phosphoserine mark. Thr-558 carries the post-translational modification Phosphothreonine; by ROCK2 and STK10.

In resting T-cells, part of a PAG1-NHERF1-MSN complex which is disrupted upon TCR activation. Interacts with NHERF1. Interacts with PPP1R16B. Interacts with SELPLG and SYK; these interactions mediate the activation of SYK by SELPLG. Interacts with PDPN (via cytoplasmic domain); this interaction activates RHOA and promotes epithelial-mesenchymal transition. Interacts with SPN/CD43 cytoplasmic tail. Interacts with CD44. Interacts with ICAM2. Interacts with ICAM3 (via C-terminus). Interacts with PDZD8. Interacts with F-actin. Interacts with CD46. Interacts with PTPN6. In terms of assembly, (Microbial infection) Interacts with HIV-1 envelope protein gp120. In terms of processing, phosphorylation on Thr-558 is crucial for the formation of microvilli-like structures. Phosphorylation by ROCK2 suppresses the head-to-tail association of the N-terminal and C-terminal halves resulting in an opened conformation which is capable of actin and membrane-binding. Phosphorylation on Thr-558 by STK10 negatively regulates lymphocyte migration and polarization. S-nitrosylation of Cys-117 is induced by interferon-gamma and oxidatively-modified low-densitity lipoprotein (LDL(ox)) implicating the iNOS-S100A8/9 transnitrosylase complex. As to expression, in all tissues and cultured cells studied.

It is found in the cell membrane. Its subcellular location is the cytoplasm. The protein resides in the cytoskeleton. It localises to the apical cell membrane. The protein localises to the cell projection. It is found in the microvillus membrane. Its subcellular location is the microvillus. With respect to regulation, a head-to-tail association, of the N-terminal and C-terminal halves results in a closed conformation (inactive form) which is incapable of actin or membrane-binding. Its function is as follows. Ezrin-radixin-moesin (ERM) family protein that connects the actin cytoskeleton to the plasma membrane and thereby regulates the structure and function of specific domains of the cell cortex. Tethers actin filaments by oscillating between a resting and an activated state providing transient interactions between moesin and the actin cytoskeleton. Once phosphorylated on its C-terminal threonine, moesin is activated leading to interaction with F-actin and cytoskeletal rearrangement. These rearrangements regulate many cellular processes, including cell shape determination, membrane transport, and signal transduction. The role of moesin is particularly important in immunity acting on both T and B-cells homeostasis and self-tolerance, regulating lymphocyte egress from lymphoid organs. Modulates phagolysosomal biogenesis in macrophages. Also participates in immunologic synapse formation. The chain is Moesin from Homo sapiens (Human).